The primary structure comprises 1439 residues: Fanconi anemia group A protein homolog (1439 aa).

The interval 1-20 (MPGSPARGAAMGGGPRGLRK) is disordered. Residues 19 to 35 (RKTWTELLAGRVKKQKY) carry the Nuclear localization signal motif.

Belongs to the multisubunit FA complex composed of FANCA, FANCB, FANCC, FANCE, FANCF, FANCG, FANCL/PHF9 and FANCM. In complex with FANCF, FANCG and FANCL, but not with FANCC, nor FANCE, interacts with HES1; this interaction may be essential for the stability and nuclear localization of FA core complex proteins. The complex with FANCC and FANCG may also include EIF2AK2 and HSP70. Interacts with FAAP20; interaction is direct. Post-translationally, phosphorylated primarily on serine residues. Phosphorylation is required for the formation of the nuclear complex. As to expression, mainly expressed in testis and lymphoid tissues like thymus, lymph nodes, and spleen, and at lower levels in kidney and ovary.

Its subcellular location is the nucleus. It localises to the cytoplasm. Its function is as follows. DNA repair protein that may operate in a postreplication repair or a cell cycle checkpoint function. May be involved in interstrand DNA cross-link repair and in the maintenance of normal chromosome stability. The chain is Fanconi anemia group A protein homolog (Fanca) from Mus musculus (Mouse).